The following is a 120-amino-acid chain: Large ribosomal subunit protein bL19 (120 aa).

The protein belongs to the bacterial ribosomal protein bL19 family.

Functionally, this protein is located at the 30S-50S ribosomal subunit interface and may play a role in the structure and function of the aminoacyl-tRNA binding site. This Chlorobium chlorochromatii (strain CaD3) protein is Large ribosomal subunit protein bL19.